We begin with the raw amino-acid sequence, 83 residues long: UPF0147 protein TK2131 (83 aa).

The protein belongs to the UPF0147 family.

This Thermococcus kodakarensis (strain ATCC BAA-918 / JCM 12380 / KOD1) (Pyrococcus kodakaraensis (strain KOD1)) protein is UPF0147 protein TK2131.